A 241-amino-acid chain; its full sequence is uncharacterized protein (241 aa).

The protein resides in the cytoplasm. It localises to the nucleus. This is an uncharacterized protein from Schizosaccharomyces pombe (strain 972 / ATCC 24843) (Fission yeast).